The primary structure comprises 205 residues: N-(5'-phosphoribosyl)anthranilate isomerase (205 aa).

This sequence belongs to the TrpF family.

It carries out the reaction N-(5-phospho-beta-D-ribosyl)anthranilate = 1-(2-carboxyphenylamino)-1-deoxy-D-ribulose 5-phosphate. The protein operates within amino-acid biosynthesis; L-tryptophan biosynthesis; L-tryptophan from chorismate: step 3/5. The protein is N-(5'-phosphoribosyl)anthranilate isomerase (TRP1) of Zygosaccharomyces bailii.